Here is a 124-residue protein sequence, read N- to C-terminus: MARLVGVDLPRDKRMEIALTYIYGVGRTRSQEILEATGIDRDLRTKDLTDDQVTQLRDYIEANLKVEGDLRREVQADIRRKIEIGCYQGLRHRRGLPVRGQRTKTNARTRKGPKRTIAGKKKAR.

The disordered stretch occupies residues 95–124; the sequence is GLPVRGQRTKTNARTRKGPKRTIAGKKKAR.

It belongs to the universal ribosomal protein uS13 family. In terms of assembly, part of the 30S ribosomal subunit. Forms a loose heterodimer with protein S19. Forms two bridges to the 50S subunit in the 70S ribosome.

In terms of biological role, located at the top of the head of the 30S subunit, it contacts several helices of the 16S rRNA. In the 70S ribosome it contacts the 23S rRNA (bridge B1a) and protein L5 of the 50S subunit (bridge B1b), connecting the 2 subunits; these bridges are implicated in subunit movement. Contacts the tRNAs in the A and P-sites. The chain is Small ribosomal subunit protein uS13 from Mycobacterium sp. (strain JLS).